A 284-amino-acid polypeptide reads, in one-letter code: Tropomyosin-1 (284 aa).

Positions 1–284 (MDGIKKKMIA…DQTFAELTGY (284 aa)) form a coiled coil. The disordered stretch occupies residues 111–131 (TKLEEASKTAEESERGRKDLE).

The protein belongs to the tropomyosin family. In terms of assembly, homodimer.

Its function is as follows. Tropomyosin, in association with the troponin complex, plays a central role in the calcium dependent regulation of muscle contraction. The polypeptide is Tropomyosin-1 (Schistosoma mansoni (Blood fluke)).